The sequence spans 340 residues: Protein RecA (340 aa).

65-72 (GPESGGKT) contributes to the ATP binding site.

It belongs to the RecA family.

The protein localises to the cytoplasm. Can catalyze the hydrolysis of ATP in the presence of single-stranded DNA, the ATP-dependent uptake of single-stranded DNA by duplex DNA, and the ATP-dependent hybridization of homologous single-stranded DNAs. It interacts with LexA causing its activation and leading to its autocatalytic cleavage. The protein is Protein RecA of Thermus thermophilus (strain ATCC BAA-163 / DSM 7039 / HB27).